A 195-amino-acid chain; its full sequence is Pyridoxal 5'-phosphate synthase subunit PdxT (195 aa).

L-glutamine is bound at residue 46–48 (GES). The active-site Nucleophile is the cysteine 78. L-glutamine-binding positions include arginine 105 and 133-134 (IR). Catalysis depends on charge relay system residues histidine 169 and glutamate 171.

Belongs to the glutaminase PdxT/SNO family. As to quaternary structure, in the presence of PdxS, forms a dodecamer of heterodimers. Only shows activity in the heterodimer.

The catalysed reaction is aldehydo-D-ribose 5-phosphate + D-glyceraldehyde 3-phosphate + L-glutamine = pyridoxal 5'-phosphate + L-glutamate + phosphate + 3 H2O + H(+). The enzyme catalyses L-glutamine + H2O = L-glutamate + NH4(+). It functions in the pathway cofactor biosynthesis; pyridoxal 5'-phosphate biosynthesis. Functionally, catalyzes the hydrolysis of glutamine to glutamate and ammonia as part of the biosynthesis of pyridoxal 5'-phosphate. The resulting ammonia molecule is channeled to the active site of PdxS. This Geobacillus thermodenitrificans (strain NG80-2) protein is Pyridoxal 5'-phosphate synthase subunit PdxT.